The primary structure comprises 166 residues: tRNA-acetylating toxin (166 aa).

The segment at 1–22 (MSGYSAPRRISDADDVTSFSSG) is disordered. The N-acetyltransferase domain maps to 1-162 (MSGYSAPRRI…LMLLMKDARA (162 aa)). The active site involves tyrosine 138.

The protein belongs to the acetyltransferase family. GNAT subfamily. Homodimer, forms a complex with cognate antitoxin TacA.

The catalysed reaction is glycyl-tRNA(Gly) + acetyl-CoA = N-acetylglycyl-tRNA(Gly) + CoA + H(+). Its function is as follows. Toxic component of a type II toxin-antitoxin (TA) system. Overexpression of this gene alone in M.smegmatis inhibits growth, while overexpression of the tacA-tacT operon does not. Acetylates glycyl-tRNA(Gly) but not other tRNAs, blocks in vitro translation in the presence, but not absence, of acetyl-coenzyme A. Peptidyl-tRNA hydrolase (pth) counteracts the product of this enzyme in vitro. Neutralized by cognate antitoxin TacA. Does not seem to be active in laboratory growth conditions. Functionally, tacA-TacT both represses and derepresses expression of its own operon. This is tRNA-acetylating toxin from Mycobacterium tuberculosis (strain ATCC 25618 / H37Rv).